Consider the following 833-residue polypeptide: Leucine--tRNA ligase (833 aa).

The 'HIGH' region motif lies at 41–52 (PYPSGAGLHVGH). The 'KMSKS' region motif lies at 610–614 (KMSKS). Lys613 is an ATP binding site.

This sequence belongs to the class-I aminoacyl-tRNA synthetase family.

Its subcellular location is the cytoplasm. The enzyme catalyses tRNA(Leu) + L-leucine + ATP = L-leucyl-tRNA(Leu) + AMP + diphosphate. The chain is Leucine--tRNA ligase from Streptococcus pneumoniae (strain Taiwan19F-14).